The primary structure comprises 320 residues: o-succinylbenzoate synthase (320 aa).

K133 functions as the Proton donor in the catalytic mechanism. D161, E190, and D213 together coordinate Mg(2+). K235 (proton acceptor) is an active-site residue.

Belongs to the mandelate racemase/muconate lactonizing enzyme family. MenC type 1 subfamily. A divalent metal cation is required as a cofactor.

The catalysed reaction is (1R,6R)-6-hydroxy-2-succinyl-cyclohexa-2,4-diene-1-carboxylate = 2-succinylbenzoate + H2O. It participates in quinol/quinone metabolism; 1,4-dihydroxy-2-naphthoate biosynthesis; 1,4-dihydroxy-2-naphthoate from chorismate: step 4/7. Its pathway is quinol/quinone metabolism; menaquinone biosynthesis. Converts 2-succinyl-6-hydroxy-2,4-cyclohexadiene-1-carboxylate (SHCHC) to 2-succinylbenzoate (OSB). The chain is o-succinylbenzoate synthase from Salmonella heidelberg (strain SL476).